Reading from the N-terminus, the 425-residue chain is Glutamyl-tRNA reductase (425 aa).

Substrate-binding positions include 49–52, Ser107, 112–114, and Gln118; these read TCNR and EPQ. Residue Cys50 is the Nucleophile of the active site. 187 to 192 provides a ligand contact to NADP(+); sequence GAGETI.

Belongs to the glutamyl-tRNA reductase family. As to quaternary structure, homodimer.

The enzyme catalyses (S)-4-amino-5-oxopentanoate + tRNA(Glu) + NADP(+) = L-glutamyl-tRNA(Glu) + NADPH + H(+). It functions in the pathway porphyrin-containing compound metabolism; protoporphyrin-IX biosynthesis; 5-aminolevulinate from L-glutamyl-tRNA(Glu): step 1/2. Functionally, catalyzes the NADPH-dependent reduction of glutamyl-tRNA(Glu) to glutamate 1-semialdehyde (GSA). The polypeptide is Glutamyl-tRNA reductase (Pseudomonas entomophila (strain L48)).